Here is a 354-residue protein sequence, read N- to C-terminus: Major egg antigen (354 aa).

The disordered stretch occupies residues 1 to 21; sequence MSGGKQHNAVSIPVNREQRSF. SHSP domains are found at residues 122–233 and 251–354; these read SVND…VAVR and AKGV…AITH.

Belongs to the small heat shock protein (HSP20) family.

In Schistosoma mansoni (Blood fluke), this protein is Major egg antigen.